Consider the following 454-residue polypeptide: Histidine--tRNA ligase (454 aa).

This sequence belongs to the class-II aminoacyl-tRNA synthetase family. In terms of assembly, homodimer.

The protein localises to the cytoplasm. The enzyme catalyses tRNA(His) + L-histidine + ATP = L-histidyl-tRNA(His) + AMP + diphosphate + H(+). The chain is Histidine--tRNA ligase from Bacteroides fragilis (strain YCH46).